A 126-amino-acid chain; its full sequence is Glycine cleavage system H protein (126 aa).

Residues 22–104 (VAYVGITDYA…YGKGWLIKIS (83 aa)) form the Lipoyl-binding domain. Lys-63 bears the N6-lipoyllysine mark.

The protein belongs to the GcvH family. The glycine cleavage system is composed of four proteins: P, T, L and H. Requires (R)-lipoate as cofactor.

Its function is as follows. The glycine cleavage system catalyzes the degradation of glycine. The H protein shuttles the methylamine group of glycine from the P protein to the T protein. This chain is Glycine cleavage system H protein, found in Parabacteroides distasonis (strain ATCC 8503 / DSM 20701 / CIP 104284 / JCM 5825 / NCTC 11152).